Here is a 235-residue protein sequence, read N- to C-terminus: Uridylate kinase (235 aa).

10–11 (GS) is an ATP binding site. G45 provides a ligand contact to UMP. ATP is bound by residues G46 and R50. Residues D67 and 115–121 (VTPGQTT) each bind UMP. Residues T141, Y147, and D150 each coordinate ATP.

It belongs to the UMP kinase family. As to quaternary structure, homohexamer.

The protein resides in the cytoplasm. The enzyme catalyses UMP + ATP = UDP + ADP. It functions in the pathway pyrimidine metabolism; CTP biosynthesis via de novo pathway; UDP from UMP (UMPK route): step 1/1. Its activity is regulated as follows. Inhibited by UTP. In terms of biological role, catalyzes the reversible phosphorylation of UMP to UDP. The protein is Uridylate kinase of Methanocorpusculum labreanum (strain ATCC 43576 / DSM 4855 / Z).